We begin with the raw amino-acid sequence, 334 residues long: Peroxidase 65 (334 aa).

The N-terminal stretch at 1–28 (MSNMQFSRGFNPFVILFCLAVVAPIISA) is a signal peptide. Intrachain disulfides connect cysteine 42–cysteine 123, cysteine 75–cysteine 80, cysteine 129–cysteine 326, and cysteine 208–cysteine 236. Histidine 73 functions as the Proton acceptor in the catalytic mechanism. 4 residues coordinate Ca(2+): aspartate 74, glycine 79, aspartate 81, and serine 83. Substrate is bound at residue proline 171. Asparagine 174 is a glycosylation site (N-linked (GlcNAc...) asparagine). Histidine 201 lines the heme b pocket. Threonine 202 provides a ligand contact to Ca(2+). A glycan (N-linked (GlcNAc...) asparagine) is linked at asparagine 238. Aspartate 250, threonine 253, and aspartate 258 together coordinate Ca(2+). N-linked (GlcNAc...) asparagine glycosylation is found at asparagine 282 and asparagine 294.

This sequence belongs to the peroxidase family. Classical plant (class III) peroxidase subfamily. It depends on heme b as a cofactor. The cofactor is Ca(2+).

It localises to the secreted. It carries out the reaction 2 a phenolic donor + H2O2 = 2 a phenolic radical donor + 2 H2O. Removal of H(2)O(2), oxidation of toxic reductants, biosynthesis and degradation of lignin, suberization, auxin catabolism, response to environmental stresses such as wounding, pathogen attack and oxidative stress. These functions might be dependent on each isozyme/isoform in each plant tissue. The polypeptide is Peroxidase 65 (PER65) (Arabidopsis thaliana (Mouse-ear cress)).